The sequence spans 676 residues: Serine/threonine-protein kinase Haspin homolog ALK2 (676 aa).

The disordered stretch occupies residues histidine 53–serine 93. The segment covering glutamine 62–threonine 75 has biased composition (polar residues). The KEN box motif lies at lysine 116–asparagine 118. The D box motif lies at arginine 150–asparagine 158. The interval serine 228–lysine 312 is disordered. The segment covering valine 232–asparagine 259 has biased composition (polar residues). The Protein kinase domain occupies leucine 383–glycine 672. ATP contacts are provided by residues isoleucine 389–glutamine 397 and lysine 430.

It belongs to the protein kinase superfamily. Ser/Thr protein kinase family. Haspin subfamily. Periodically phosphorylated during the cell cycle with a phosphorylation peak during mitosis and hyperphosphorylated after DNA damage.

It carries out the reaction L-seryl-[protein] + ATP = O-phospho-L-seryl-[protein] + ADP + H(+). It catalyses the reaction L-threonyl-[protein] + ATP = O-phospho-L-threonyl-[protein] + ADP + H(+). Serine/threonine haspin-like protein kinase involved in cell cycle regulation. This chain is Serine/threonine-protein kinase Haspin homolog ALK2 (ALK2), found in Saccharomyces cerevisiae (strain ATCC 204508 / S288c) (Baker's yeast).